Here is a 707-residue protein sequence, read N- to C-terminus: D-(-)-3-hydroxybutyrate oligomer hydrolase (707 aa).

The first 32 residues, 1-32 (MASVFKVRSASGHVPVVRTLAAMMAVTVVLTA), serve as a signal peptide directing secretion. Ser-321 acts as the Charge relay system in catalysis.

Belongs to the D-(-)-3-hydroxybutyrate oligomer hydrolase family.

The protein resides in the secreted. It carries out the reaction (3R)-hydroxybutanoate dimer + H2O = 2 (R)-3-hydroxybutanoate + H(+). The protein operates within lipid metabolism; butanoate metabolism. Functionally, participates in the degradation of poly-3-hydroxybutyrate (PHB). It works downstream of poly(3-hydroxybutyrate) depolymerase, hydrolyzing D(-)-3-hydroxybutyrate oligomers of various length (3HB-oligomers) into 3HB-monomers. This is D-(-)-3-hydroxybutyrate oligomer hydrolase from Paraburkholderia xenovorans (strain LB400).